Reading from the N-terminus, the 723-residue chain is Catalase-peroxidase (723 aa).

Positions 1–29 (MDGNDLVENKCPVMHGGITVAGHSNTAWW) are cleaved as a signal peptide. The tryptophyl-tyrosyl-methioninium (Trp-Tyr) (with M-251) cross-link spans 97-225 (WHSAGSYRLA…LAAVQMGLIY (129 aa)). The active-site Proton acceptor is His98. The segment at residues 225–251 (YVNPEGVNGKSDPLKSAAQVRETFARM) is a cross-link (tryptophyl-tyrosyl-methioninium (Tyr-Met) (with W-97)). Position 266 (His266) interacts with heme b.

This sequence belongs to the peroxidase family. Peroxidase/catalase subfamily. Homodimer or homotetramer. Requires heme b as cofactor. Formation of the three residue Trp-Tyr-Met cross-link is important for the catalase, but not the peroxidase activity of the enzyme.

The enzyme catalyses H2O2 + AH2 = A + 2 H2O. It catalyses the reaction 2 H2O2 = O2 + 2 H2O. Its function is as follows. Bifunctional enzyme with both catalase and broad-spectrum peroxidase activity. The sequence is that of Catalase-peroxidase from Hyphomonas neptunium (strain ATCC 15444).